The chain runs to 388 residues: Succinate--CoA ligase [ADP-forming] subunit beta (388 aa).

Residues 9 to 244 enclose the ATP-grasp domain; sequence KEILRKFGVA…PDEEDPKETQ (236 aa). ATP is bound by residues Lys46, 53–55, Glu99, Cys102, and Glu107; that span reads GRG. Residues Asn199 and Asp213 each coordinate Mg(2+). Substrate is bound by residues Asn264 and 321 to 323; that span reads GIM.

The protein belongs to the succinate/malate CoA ligase beta subunit family. As to quaternary structure, heterotetramer of two alpha and two beta subunits. The cofactor is Mg(2+).

The catalysed reaction is succinate + ATP + CoA = succinyl-CoA + ADP + phosphate. It carries out the reaction GTP + succinate + CoA = succinyl-CoA + GDP + phosphate. The protein operates within carbohydrate metabolism; tricarboxylic acid cycle; succinate from succinyl-CoA (ligase route): step 1/1. Succinyl-CoA synthetase functions in the citric acid cycle (TCA), coupling the hydrolysis of succinyl-CoA to the synthesis of either ATP or GTP and thus represents the only step of substrate-level phosphorylation in the TCA. The beta subunit provides nucleotide specificity of the enzyme and binds the substrate succinate, while the binding sites for coenzyme A and phosphate are found in the alpha subunit. This Anaeromyxobacter dehalogenans (strain 2CP-C) protein is Succinate--CoA ligase [ADP-forming] subunit beta.